We begin with the raw amino-acid sequence, 531 residues long: Non-muscle caldesmon (531 aa).

Positions 20 to 200 (AYQRNDDDEE…LKGGNLGENQ (181 aa)) are myosin and calmodulin-binding. The segment at 21–379 (YQRNDDDEEE…KKPFKCFTPK (359 aa)) is disordered. The segment covering 41 to 50 (QERLRQKQEE) has biased composition (basic and acidic residues). Residues 54 to 68 (GQVTDQVEAHVQNSA) are compositionally biased toward polar residues. Residues 93 to 116 (RLARREERRQKRLQEALERQKEFD) are compositionally biased toward basic and acidic residues. The span at 120-133 (TDGSLSVPSRRMQN) shows a compositional bias: polar residues. Serine 123 is modified (phosphoserine). A compositionally biased stretch (basic and acidic residues) spans 143–156 (GEEKGESRSGRYEM). Over residues 162-172 (VITSYQKNSYQ) the composition is skewed to polar residues. A compositionally biased stretch (basic and acidic residues) spans 200 to 227 (QIKDEKIKKDKEPKEEVKNFLDRKKGFT). At serine 249 the chain carries Phosphoserine; by CDK1. 2 stretches are compositionally biased toward basic and acidic residues: residues 271-297 (AGKR…KQKQ) and 305-372 (EELK…DKKP). Residues 303 to 360 (ELEELKKKREERRKVLEEEEQRRKQEEADRKAREEEEKRRLKEEIERRRAEAAEKRQK) form a tropomyosin-binding region. The residue at position 382 (serine 382) is a Phosphoserine. Residue lysine 384 forms a Glycyl lysine isopeptide (Lys-Gly) (interchain with G-Cter in SUMO2) linkage. Residues 392 to 424 (LNKSVQKSGVKSTHQAAVVSKIDSRLEQYTNAI) form a strong actin-binding region. Serine 395 bears the Phosphoserine mark. The tropomyosin-binding stretch occupies residues 402-412 (KSTHQAAVVSK). The segment at 454–460 (WEKGSVF) is calmodulin-binding. Residues 458–531 (SVFSSPSASG…VDKVTSPTKV (74 aa)) are disordered. Positions 459–471 (VFSSPSASGTPNK) are enriched in polar residues. At serine 462 the chain carries Phosphoserine; by CDK1. Threonine 468 carries the post-translational modification Phosphothreonine; by CDK1. Phosphoserine; by CDK1 occurs at positions 491 and 497. Basic and acidic residues predominate over residues 503 to 522 (SDLRPGDVSGKRNLWEKQSV). The weak actin-binding stretch occupies residues 506-531 (RPGDVSGKRNLWEKQSVDKVTSPTKV). Serine 527 is subject to Phosphoserine; by CDK1.

This sequence belongs to the caldesmon family. In non-muscle cells, phosphorylation by CDK1 during mitosis causes caldesmon to dissociate from microfilaments. Phosphorylation reduces caldesmon binding to actin, myosin, and calmodulin as well as its inhibition of actomyosin ATPase activity. Phosphorylation also occurs in both quiescent and dividing smooth muscle cells with similar effects on the interaction with actin and calmodulin and on microfilaments reorganization. CDK1-mediated phosphorylation promotes Schwann cell migration during peripheral nerve regeneration. High-molecular-weight caldesmon (h-caldesmon) is predominantly expressed in smooth muscles, whereas low-molecular-weight caldesmon (l-caldesmon) is widely distributed in non-muscle tissues and cells. Not expressed in skeletal muscle or heart.

The protein localises to the cytoplasm. It is found in the cytoskeleton. Its subcellular location is the myofibril. It localises to the stress fiber. Its function is as follows. Actin- and myosin-binding protein implicated in the regulation of actomyosin interactions in smooth muscle and nonmuscle cells (could act as a bridge between myosin and actin filaments). Stimulates actin binding of tropomyosin which increases the stabilization of actin filament structure. In muscle tissues, inhibits the actomyosin ATPase by binding to F-actin. This inhibition is attenuated by calcium-calmodulin and is potentiated by tropomyosin. Interacts with actin, myosin, two molecules of tropomyosin and with calmodulin. Also plays an essential role during cellular mitosis and receptor capping. Involved in Schwann cell migration during peripheral nerve regeneration. The polypeptide is Non-muscle caldesmon (Cald1) (Rattus norvegicus (Rat)).